Reading from the N-terminus, the 756-residue chain is 5-methyltetrahydropteroyltriglutamate--homocysteine methyltransferase (756 aa).

5-methyltetrahydropteroyltri-L-glutamate contacts are provided by residues 16 to 19 and Lys112; that span reads RELK. Residues 432 to 434 and Glu485 each bind L-homocysteine; that span reads IGS. Residues 432–434 and Glu485 contribute to the L-methionine site; that span reads IGS. 5-methyltetrahydropteroyltri-L-glutamate contacts are provided by residues 516-517 and Trp562; that span reads RC. Asp600 is an L-homocysteine binding site. Asp600 contacts L-methionine. Glu606 contributes to the 5-methyltetrahydropteroyltri-L-glutamate binding site. The Zn(2+) site is built by His642, Cys644, and Glu666. The active-site Proton donor is the His695. Cys727 is a Zn(2+) binding site.

It belongs to the vitamin-B12 independent methionine synthase family. Requires Zn(2+) as cofactor.

The catalysed reaction is 5-methyltetrahydropteroyltri-L-glutamate + L-homocysteine = tetrahydropteroyltri-L-glutamate + L-methionine. Its pathway is amino-acid biosynthesis; L-methionine biosynthesis via de novo pathway; L-methionine from L-homocysteine (MetE route): step 1/1. Its function is as follows. Catalyzes the transfer of a methyl group from 5-methyltetrahydrofolate to homocysteine resulting in methionine formation. The chain is 5-methyltetrahydropteroyltriglutamate--homocysteine methyltransferase from Haemophilus influenzae (strain ATCC 51907 / DSM 11121 / KW20 / Rd).